The chain runs to 314 residues: Putative thiamine biosynthesis protein HI_0357 (314 aa).

Belongs to the NMT1/THI5 family.

In terms of biological role, probably involved in thiamine biosynthesis. The sequence is that of Putative thiamine biosynthesis protein HI_0357 from Haemophilus influenzae (strain ATCC 51907 / DSM 11121 / KW20 / Rd).